A 98-amino-acid chain; its full sequence is Nuclear protein 2 (98 aa).

The span at 1–11 (MEPAAPTVQPR) shows a compositional bias: low complexity. 2 disordered regions span residues 1-24 (MEPA…PPVG) and 78-98 (LNSQ…TRLT). The span at 81–98 (QRKRRQRQLQPRPRTRLT) shows a compositional bias: basic residues.

This sequence belongs to the NUPR family.

The protein resides in the nucleus. In terms of biological role, acts as a transcriptional repressor by inhibiting gene expression at the NUPR1 promoter in a p53/TP53-dependent manner in cancer cells. Involved in the G1 cell cycle arrest, and in a decrease in cell viability and cell proliferation. Plays a role as a negative regulator of the protumoral factor NUPR1. The polypeptide is Nuclear protein 2 (Bos taurus (Bovine)).